The sequence spans 585 residues: A-type ATP synthase subunit A (585 aa).

The interval 192–211 (MRQEWPVREPRPTVEKKTPR) is disordered. A compositionally biased stretch (basic and acidic residues) spans 196–211 (WPVREPRPTVEKKTPR). Residue 237–244 (GPFGSGKT) coordinates ATP.

This sequence belongs to the ATPase alpha/beta chains family. In terms of assembly, has multiple subunits with at least A(3), B(3), C, D, E, F, H, I and proteolipid K(x).

It is found in the cell membrane. It carries out the reaction ATP + H2O + 4 H(+)(in) = ADP + phosphate + 5 H(+)(out). Its function is as follows. Component of the A-type ATP synthase that produces ATP from ADP in the presence of a proton gradient across the membrane. The A chain is the catalytic subunit. The polypeptide is A-type ATP synthase subunit A (Haloquadratum walsbyi (strain DSM 16790 / HBSQ001)).